The sequence spans 404 residues: Glucosyl-3-phosphoglycerate synthase (404 aa).

Asp146 provides a ligand contact to a divalent metal cation. 188 to 190 (GRV) is a binding site for (2R)-3-phosphoglycerate. His270 contributes to the a divalent metal cation binding site.

The protein belongs to the glycosyltransferase 2 family. The cofactor is Mn(2+). Co(2+) serves as cofactor. It depends on Mg(2+) as a cofactor.

The enzyme catalyses an NDP-alpha-D-glucose + (2R)-3-phosphoglycerate = (2R)-2-O-(alpha-D-glucopyranosyl)-3-phospho-glycerate + a ribonucleoside 5'-diphosphate + H(+). Functionally, involved in the biosynthesis of 6-O-methylglucose lipopolysaccarides (MGLPs). Catalyzes the transfer of a glucose (Glc) moiety from uridine diphosphate (UDP-Glc) to the position 2 of 3-phospho-D-glycerate (3-PGA) to form glucosyl-3-phosphoglycerate (GPG). The sequence is that of Glucosyl-3-phosphoglycerate synthase from Methanococcoides burtonii (strain DSM 6242 / NBRC 107633 / OCM 468 / ACE-M).